Reading from the N-terminus, the 1560-residue chain is Lysine-specific demethylase 5C (1560 aa).

Residues 14–55 (CPVFEPSWAEFRDPLGYIAKIRPIAEKSGICKIRPPADWQPP) form the JmjN domain. Residues 79–169 (TRVKLNYLDQ…IVYPYEMYQS (91 aa)) form the ARID domain. Residues 197 to 207 (LRQSVQPSKFN) are compositionally biased toward polar residues. The interval 197–227 (LRQSVQPSKFNSYGRRAKRLQPDPEPTEEDI) is disordered. Residues Lys-205, Lys-229, Lys-244, and Lys-274 each participate in a glycyl lysine isopeptide (Lys-Gly) (interchain with G-Cter in SUMO2) cross-link. Ser-287 is subject to Phosphoserine. Residue Lys-295 forms a Glycyl lysine isopeptide (Lys-Gly) (interchain with G-Cter in SUMO2) linkage. Phosphoserine occurs at positions 301 and 317. The PHD-type 1 zinc finger occupies 326–372 (VCRMCSRGDEDDKLLLCDGCDDNYHIFCLLPPLPEIPKGVWRCPKCV). Residue Tyr-440 coordinates 2-oxoglutarate. The JmjC domain occupies 468–634 (EYATSGWNLN…AGRQCIEHYR (167 aa)). Fe cation is bound by residues His-514 and Glu-516. 3 residues coordinate 2-oxoglutarate: Ser-522, Asn-524, and Lys-532. His-602 contacts Fe cation. Residues 707–759 (CIKCKTTCFLSALACYDCPDGLVCLSHINDLCKCSSSRQYLRYRYTLDELPAM) form a C5HC2 zinc finger. A phosphoserine mark is found at Ser-893 and Ser-897. Lys-1127 is covalently cross-linked (Glycyl lysine isopeptide (Lys-Gly) (interchain with G-Cter in SUMO2)). Residues 1161–1181 (ILQLRRTNSAKPSPLASSSTA) are disordered. Low complexity predominate over residues 1169–1181 (SAKPSPLASSSTA). Residues 1187 to 1248 (ICVCGQVLAG…DTKFLCPLCM (62 aa)) form a PHD-type 2 zinc finger. 2 disordered regions span residues 1316–1371 (QAEP…GSGK) and 1444–1560 (ERHG…QQQL). Basic and acidic residues predominate over residues 1335–1345 (PLREGSGKDMP). Ser-1359 is modified (phosphoserine). Residues 1448-1463 (SRARGRALERRRRRKV) are compositionally biased toward basic residues. The segment covering 1464–1481 (DRGGEGDDPAREELEPKR) has biased composition (basic and acidic residues). Residues 1488–1503 (EAEEVQEEEELEEETG) show a composition bias toward acidic residues. Over residues 1516-1544 (SPSTQENQNGLEPAEGTTSGPSAPFSTLT) the composition is skewed to polar residues.

This sequence belongs to the JARID1 histone demethylase family. In terms of assembly, part of two distinct complexes, one containing E2F6, and the other containing REST. Interacts with ZMYND8. The cofactor is Fe(2+). As to expression, expressed in all tissues examined. Highest levels found in brain and skeletal muscle.

The protein resides in the nucleus. The enzyme catalyses N(6),N(6),N(6)-trimethyl-L-lysyl(4)-[histone H3] + 3 2-oxoglutarate + 3 O2 = L-lysyl(4)-[histone H3] + 3 formaldehyde + 3 succinate + 3 CO2. Its activity is regulated as follows. The inhibitor KDOAM-25 and others inhibit its demethylase activity, resulting to cell cycle arrest in myeloma cells. Histone demethylase that specifically demethylates 'Lys-4' of histone H3, thereby playing a central role in histone code. Does not demethylate histone H3 'Lys-9', H3 'Lys-27', H3 'Lys-36', H3 'Lys-79' or H4 'Lys-20'. Demethylates trimethylated and dimethylated but not monomethylated H3 'Lys-4'. Participates in transcriptional repression of neuronal genes by recruiting histone deacetylases and REST at neuron-restrictive silencer elements. Represses the CLOCK-BMAL1 heterodimer-mediated transcriptional activation of the core clock component PER2. The protein is Lysine-specific demethylase 5C of Homo sapiens (Human).